The chain runs to 554 residues: Glucose-6-phosphate isomerase (554 aa).

E359 (proton donor) is an active-site residue. Active-site residues include H390 and K518.

It belongs to the GPI family.

The protein resides in the cytoplasm. It carries out the reaction alpha-D-glucose 6-phosphate = beta-D-fructose 6-phosphate. It participates in carbohydrate biosynthesis; gluconeogenesis. The protein operates within carbohydrate degradation; glycolysis; D-glyceraldehyde 3-phosphate and glycerone phosphate from D-glucose: step 2/4. Functionally, catalyzes the reversible isomerization of glucose-6-phosphate to fructose-6-phosphate. This is Glucose-6-phosphate isomerase from Pseudomonas putida (strain W619).